The chain runs to 340 residues: Protein-arginine kinase (340 aa).

A Phosphagen kinase C-terminal domain is found at 21–242; sequence VVLSSRIRLA…EQIIMQERVA (222 aa). ATP contacts are provided by residues 24-28, H79, R113, 164-168, and 195-200; these read SSRIR, RASVM, and RGIYGE.

This sequence belongs to the ATP:guanido phosphotransferase family.

It catalyses the reaction L-arginyl-[protein] + ATP = N(omega)-phospho-L-arginyl-[protein] + ADP + H(+). Functionally, catalyzes the specific phosphorylation of arginine residues in proteins. The chain is Protein-arginine kinase from Listeria monocytogenes serotype 4b (strain F2365).